A 366-amino-acid polypeptide reads, in one-letter code: 5-hydroxytryptamine receptor 1F (366 aa).

Residues Met1–Ile24 lie on the Extracellular side of the membrane. Asn5 and Asn10 each carry an N-linked (GlcNAc...) asparagine glycan. Residues Leu25–Ile49 form a helical membrane-spanning segment. The Cytoplasmic portion of the chain corresponds to Val50–Asn59. A helical transmembrane segment spans residues Tyr60 to Ile81. The Extracellular portion of the chain corresponds to Val82–Cys96. Cysteines 96 and 172 form a disulfide. A helical membrane pass occupies residues Asp97–Leu119. Serotonin-binding residues include Asp103 and Cys107. Residues Asp120–Tyr122 carry the DRY motif; important for ligand-induced conformation changes motif. Residues Asp120 to Gln139 are Cytoplasmic-facing. Residues Ala140–Leu159 traverse the membrane as a helical segment. Topologically, residues Phe160–His178 are extracellular. A helical membrane pass occupies residues Ile179–Tyr202. At Lys203–Ala291 the chain is on the cytoplasmic side. Residues Ala292–Val315 traverse the membrane as a helical segment. The Extracellular portion of the chain corresponds to Val316–Glu327. The helical transmembrane segment at Met328 to Phe350 threads the bilayer. Positions Asn343 to Tyr347 match the NPxxY motif; important for ligand-induced conformation changes and signaling motif. At Asn351–Tyr366 the chain is on the cytoplasmic side.

It belongs to the G-protein coupled receptor 1 family.

It localises to the cell membrane. Functionally, G-protein coupled receptor for 5-hydroxytryptamine (serotonin). Also functions as a receptor for various alkaloids and psychoactive substances. Ligand binding causes a conformation change that triggers signaling via guanine nucleotide-binding proteins (G proteins) and modulates the activity of downstream effectors, such as adenylate cyclase. HTR1F is coupled to G(i)/G(o) G alpha proteins and mediates inhibitory neurotransmission by inhibiting adenylate cyclase activity. This chain is 5-hydroxytryptamine receptor 1F (HTR1F), found in Cavia porcellus (Guinea pig).